The chain runs to 147 residues: Deoxyuridine 5'-triphosphate nucleotidohydrolase (147 aa).

Residues 67–69 (RSG), Asn80, and 84–86 (LID) contribute to the substrate site.

This sequence belongs to the dUTPase family. Requires Mg(2+) as cofactor.

The enzyme catalyses dUTP + H2O = dUMP + diphosphate + H(+). It functions in the pathway pyrimidine metabolism; dUMP biosynthesis; dUMP from dCTP (dUTP route): step 2/2. This enzyme is involved in nucleotide metabolism: it produces dUMP, the immediate precursor of thymidine nucleotides and it decreases the intracellular concentration of dUTP so that uracil cannot be incorporated into DNA. This is Deoxyuridine 5'-triphosphate nucleotidohydrolase from Gloeobacter violaceus (strain ATCC 29082 / PCC 7421).